The chain runs to 407 residues: Aspartate aminotransferase, cytoplasmic (407 aa).

The L-aspartate site is built by G39, W136, and N189. K253 bears the N6-(pyridoxal phosphate)lysine mark. Residue R381 participates in L-aspartate binding.

Belongs to the class-I pyridoxal-phosphate-dependent aminotransferase family. Homodimer. Requires pyridoxal 5'-phosphate as cofactor.

It is found in the cytoplasm. The catalysed reaction is L-aspartate + 2-oxoglutarate = oxaloacetate + L-glutamate. Its function is as follows. Important for the metabolism of amino acids and Krebs-cycle related organic acids. In plants, it is involved in nitrogen metabolism and in aspects of carbon and energy metabolism. The protein is Aspartate aminotransferase, cytoplasmic of Oryza sativa subsp. japonica (Rice).